The primary structure comprises 87 residues: Protein ORF3 (87 aa).

The segment at 58-87 is disordered; that stretch reads GALNNAPREPSAPPLSQTLSPRQVLARYQM. Residues 67–70 carry the PTAP/PSAP motif motif; sequence PSAP.

The protein belongs to the hepevirus ORF3 protein family. Palmitoylated in the N-terminus.

It localises to the host endoplasmic reticulum membrane. The protein localises to the host cytoplasm. Its subcellular location is the host cytoskeleton. The protein resides in the virion. It is found in the host cell membrane. Its function is as follows. Small multifunctional phosphoprotein involved in virion morphogenesis, egress and counteracting host innate immunity. This is Protein ORF3 from Avian hepatitis E virus (isolate Chicken/California/Meng) (AHEV).